We begin with the raw amino-acid sequence, 475 residues long: Putative amidase AmiD (475 aa).

Catalysis depends on charge relay system residues Lys93 and Ser166. Residue Ser190 is the Acyl-ester intermediate of the active site.

Belongs to the amidase family.

The enzyme catalyses a monocarboxylic acid amide + H2O = a monocarboxylate + NH4(+). This chain is Putative amidase AmiD (amiD), found in Mycobacterium bovis (strain ATCC BAA-935 / AF2122/97).